The following is a 109-amino-acid chain: Mitochondrial pyruvate carrier 1 (109 aa).

Residue A2 is modified to N-acetylalanine. At 2–20 (AGALVRKAADYVRSKDFRD) the chain is on the mitochondrial matrix side. A helical transmembrane segment spans residues 21–41 (YLMSTHFWGPVANWGLPIAAI). Over 42–52 (NDMKKSPEIIS) the chain is Mother cell cytoplasmic. Residues 53-71 (GRMTFALCCYSLTFMRFAY) form a helical membrane-spanning segment. Position 72 is an N6-acetyllysine (K72). At 72 to 109 (KVQPRNWLLFACHATNEVAQLIQGGRLIRHEMSKKASA) the chain is on the mitochondrial matrix side.

Homodimer. Forms heterodimer with MPC2. The heterodimer is the more stable and dominant form.

It is found in the mitochondrion inner membrane. It catalyses the reaction pyruvate(out) + H(+)(out) = pyruvate(in) + H(+)(in). Functionally, mediates the uptake of pyruvate into mitochondria. This Bos taurus (Bovine) protein is Mitochondrial pyruvate carrier 1 (MPC1).